Consider the following 1007-residue polypeptide: MSIQSEQDFFKFEELCKDFYLKPEETIKIDDILHQYFLNPNFLIEYKQILSFTKNSYVVAQVIRGLIKCVTSFWTSLTPNQKNDMSKSIEHHCIGLRILKDIISEFNEYIGEHLTVLQHRNISISLRDNILLDIFCISLESLNYALANSMDEKFKSIKELALDLSYSCLSFDFIKTTSIDSSEEILTVQIPSQWKSTFDENNPLELFFKIYKQYHSTKSLECILQIVSIRRSFFTTEDERVKFLASIVQYTTEILKSNIGFNEPNNHLVFSRVIERLKTNYHLNNLVTVVGYNDWISNLSTFTIDTLKNPQFSPNSIYFLLTLWAKLVSSIIYVKGDPSKTYLEKYSPIIMESFINSKIDNSYSDEEDEHLMDYEKMVEILEGIPHLGRITYQATCRQIILLFDSISSKFLNETNPTQLEVYERQCAWLVYIIGCLILGRTSINSSEEHDKIDGELSVRVFILIGYNDKKLSAESNTQYQYRTSRISLELSFIYFMQNFRRIYIGENSISSSKIYQRISELSGPTDHTSVLFSIVQKIGFNFKYWAENDEIIKKSLDMFWESVNGHSTSKMLIDNKITKDILKTHSSQVFPFLEKNSNPRNRTSLYKTIGKLLFTDENMGFFDEFIAPFDDTIKHLLNISTPEQFRTEEIKRKVIGLLRDLRGIITSANSKRSYLLFFEWIHLNFSEVLIKIINVWVDSPEVTTSLLKFISEFVFNRQSRLIFDSSSANGFIIFRDTSKILVSYASLILKANISKQDLYKFKIKGIQTSMLLFTRCLVGGYCNFGVFELYGDPSFTSAIDYIFQLCLSVSLDELMSFPKASKAYVTMLEALCLGHTLSIIQLNQQYFIHIMKSLHRCLDSQDVTMSSSSCTSIEKIITVCYYHLKKKNSQCLQAIHQNFFSNSNILYEIIDKIISIIIYEDNFNQFMFSKLLLTCIIFHQDTFTTLKQKYIHSFNSQCPEKVEKAFVQLMENTLDNLETKNKDKFTSNVSIFRKEMKLISSSTGRYL.

This sequence belongs to the exportin family.

The protein resides in the nucleus. It is found in the cytoplasm. The protein localises to the nuclear pore complex. Mediates the nuclear export of proteins (cargos) with broad substrate specificity. This chain is Exportin-7 (xpo7), found in Dictyostelium discoideum (Social amoeba).